The primary structure comprises 409 residues: NADH-quinone oxidoreductase subunit D 1 (409 aa).

The protein belongs to the complex I 49 kDa subunit family. In terms of assembly, NDH-1 is composed of 14 different subunits. Subunits NuoB, C, D, E, F, and G constitute the peripheral sector of the complex.

Its subcellular location is the cell inner membrane. It carries out the reaction a quinone + NADH + 5 H(+)(in) = a quinol + NAD(+) + 4 H(+)(out). Its function is as follows. NDH-1 shuttles electrons from NADH, via FMN and iron-sulfur (Fe-S) centers, to quinones in the respiratory chain. The immediate electron acceptor for the enzyme in this species is believed to be ubiquinone. Couples the redox reaction to proton translocation (for every two electrons transferred, four hydrogen ions are translocated across the cytoplasmic membrane), and thus conserves the redox energy in a proton gradient. This chain is NADH-quinone oxidoreductase subunit D 1, found in Solibacter usitatus (strain Ellin6076).